Here is a 139-residue protein sequence, read N- to C-terminus: ATP synthase epsilon chain (139 aa).

The protein belongs to the ATPase epsilon chain family. As to quaternary structure, F-type ATPases have 2 components, CF(1) - the catalytic core - and CF(0) - the membrane proton channel. CF(1) has five subunits: alpha(3), beta(3), gamma(1), delta(1), epsilon(1). CF(0) has three main subunits: a, b and c.

Its subcellular location is the cell inner membrane. Its function is as follows. Produces ATP from ADP in the presence of a proton gradient across the membrane. The protein is ATP synthase epsilon chain of Alcanivorax borkumensis (strain ATCC 700651 / DSM 11573 / NCIMB 13689 / SK2).